A 95-amino-acid polypeptide reads, in one-letter code: Large ribosomal subunit protein bL25 (95 aa).

It belongs to the bacterial ribosomal protein bL25 family. In terms of assembly, part of the 50S ribosomal subunit; part of the 5S rRNA/L5/L18/L25 subcomplex. Contacts the 5S rRNA. Binds to the 5S rRNA independently of L5 and L18.

Its function is as follows. This is one of the proteins that binds to the 5S RNA in the ribosome where it forms part of the central protuberance. The protein is Large ribosomal subunit protein bL25 of Shewanella woodyi (strain ATCC 51908 / MS32).